A 1120-amino-acid chain; its full sequence is Transcription-repair-coupling factor (1120 aa).

The 166-residue stretch at 591–756 (DLSNGMLMDR…MTGLKELSII (166 aa)) folds into the Helicase ATP-binding domain. 604–611 (GDVGFGKT) provides a ligand contact to ATP. Positions 709–712 (DEEQ) match the DEEQ box motif. One can recognise a Helicase C-terminal domain in the interval 777–931 (IIRDALLHEH…GFTIASHDMD (155 aa)).

The protein in the N-terminal section; belongs to the UvrB family. This sequence in the C-terminal section; belongs to the helicase family. RecG subfamily.

The protein localises to the cytoplasm. Couples transcription and DNA repair by recognizing RNA polymerase (RNAP) stalled at DNA lesions. Mediates ATP-dependent release of RNAP and its truncated transcript from the DNA, and recruitment of nucleotide excision repair machinery to the damaged site. The polypeptide is Transcription-repair-coupling factor (Rickettsia bellii (strain RML369-C)).